Here is a 187-residue protein sequence, read N- to C-terminus: Orotate phosphoribosyltransferase (187 aa).

5-phospho-alpha-D-ribose 1-diphosphate-binding positions include Arg99, Lys100, Lys103, His105, and 125–133; that span reads DDVITTGGS. Orotate is bound by residues Thr129 and Arg157.

It belongs to the purine/pyrimidine phosphoribosyltransferase family. PyrE subfamily. As to quaternary structure, homodimer. Requires Mg(2+) as cofactor.

It catalyses the reaction orotidine 5'-phosphate + diphosphate = orotate + 5-phospho-alpha-D-ribose 1-diphosphate. Its pathway is pyrimidine metabolism; UMP biosynthesis via de novo pathway; UMP from orotate: step 1/2. Functionally, catalyzes the transfer of a ribosyl phosphate group from 5-phosphoribose 1-diphosphate to orotate, leading to the formation of orotidine monophosphate (OMP). In Leptospira borgpetersenii serovar Hardjo-bovis (strain L550), this protein is Orotate phosphoribosyltransferase.